The sequence spans 808 residues: MASDENIGADGEQKPSRPFLRKGQGTARFRMPRNNKTSAGAPPTSELSSASSPSINVPRFSLSNALPNSARTVDSGISNEDETRPPTTASLPMDQPSLSSSPENRLNPAPSVAEEHGHSGQHAEEEEDNDTDEVSAMPSFVPDEPSTLVNSDHELSDDALKYKNAAAEFKAFERRMDSMRSASTITTSLATPSSCAPSNSSEPPTRSTPIMNDLGVGPNNHNWPSSMQELSGISLETPQARPLGSNRINQLVRSEAQTGISLLQHHERPTVTAPLRRNDMMNSSRQNPQNGNVQDENRPEHVYDQPIHVPGSSLDRQKLEIEIRRHRNLNIQLRDTIAHLDYAEESVHTTKRQLEEKISEVNNFKKELIEEFKKCKKGVEEEFEKKFEKIKEDYDELYEKLKRDQRDLERDQKILKKGTGERNKEFTETIATLRDKLRASETKNAQYRQDIRVRDEKLKKKDEEIEKLQKDGNRLKSTLQTLEKRVKQLRTEKERDDKEKEMFAKVAMNRKTSNPVPPVLNQSVPISITSNGPSRHPSSSSLTTFRKPSTSNRERGVSWADEPNEQSLEAVPQEFLMMPVKEMPGKFGKCTIYRDSLGETSKVTDTIANGLLFEYSNGDLRWVNRQNAVNIYISAVDKTVRIDLPTYNISIIHTFQRQVEVLRPGNNITLISIKRREVRTDLIYQNGMYKTEIFNRDGRYVTKDFSNQEVSRKYNPGTHTYRDNQCRYVLVTDYNDFELVEPEFRLRWYQGDPTGLNNQYILKIIGRPECSEKTLRLEVNLSTCEGTLETAEMIGDKRRKTTLFQWKK.

Residues 1–151 are disordered; it reads MASDENIGAD…PDEPSTLVNS (151 aa). Residues 42–54 show a composition bias toward low complexity; that stretch reads PPTSELSSASSPS. Polar residues-rich tracts occupy residues 61–78 and 85–104; these read SLSN…SGIS and PPTT…SPEN. The segment covering 113–123 has biased composition (basic and acidic residues); sequence AEEHGHSGQHA. A compositionally biased stretch (acidic residues) spans 124–133; that stretch reads EEEEDNDTDE. Positions 161 to 181 form a coiled coil; the sequence is KYKNAAAEFKAFERRMDSMRS. 2 disordered regions span residues 187–206 and 271–298; these read TSLA…PPTR and VTAP…DENR. A compositionally biased stretch (polar residues) spans 280–294; it reads MMNSSRQNPQNGNVQ. Residues 314 to 503 adopt a coiled-coil conformation; sequence LDRQKLEIEI…ERDDKEKEMF (190 aa). Residues 511–529 show a composition bias toward polar residues; it reads KTSNPVPPVLNQSVPISIT. Positions 511-564 are disordered; sequence KTSNPVPPVLNQSVPISITSNGPSRHPSSSSLTTFRKPSTSNRERGVSWADEPN. Positions 530–541 are enriched in low complexity; sequence SNGPSRHPSSSS. Residues 542–551 show a composition bias toward polar residues; the sequence is LTTFRKPSTS.

Interacts with hyls-1; leading to hyls-1 localization into newly forming centrioles.

The protein resides in the cytoplasm. It localises to the cytoskeleton. It is found in the microtubule organizing center. The protein localises to the centrosome. Its function is as follows. Required for centrosome duplication. Plays a central role in determining centrosome size. This Caenorhabditis elegans protein is Spindle assembly abnormal protein 4 (sas-4).